A 64-amino-acid chain; its full sequence is Phi-buthitoxin-Hj1a (64 aa).

Residues 1 to 18 (MNSFVVVLLLFIAILCNA) form the signal peptide. Disulfide bonds link C29–C43, C36–C49, and C42–C58.

This sequence belongs to the scorpion calcin-like family. Expressed by the venom gland.

The protein localises to the secreted. Functionally, may increase intracellular calcium release through the activation of nuclear inositol 1,4,5-trisphosphate receptors (ITPR) of cardiomyocytes, thereby causing an increase in the contraction frequency of these cells. This is Phi-buthitoxin-Hj1a from Hottentotta judaicus (Black scorpion).